We begin with the raw amino-acid sequence, 292 residues long: Coatomer subunit epsilon (292 aa).

It belongs to the COPE family. Oligomeric complex that consists of at least the alpha, beta, beta', gamma, delta, epsilon and zeta subunits.

The protein resides in the cytoplasm. It is found in the golgi apparatus membrane. The protein localises to the cytoplasmic vesicle. Its subcellular location is the COPI-coated vesicle membrane. The coatomer is a cytosolic protein complex that binds to dilysine motifs and reversibly associates with Golgi non-clathrin-coated vesicles, which further mediate biosynthetic protein transport from the ER, via the Golgi up to the trans Golgi network. The coatomer complex is required for budding from Golgi membranes, and is essential for the retrograde Golgi-to-ER transport of dilysine-tagged proteins. This is Coatomer subunit epsilon (cope-1) from Caenorhabditis elegans.